We begin with the raw amino-acid sequence, 421 residues long: Peptide chain release factor subunit 1 (421 aa).

The protein belongs to the eukaryotic release factor 1 family. In terms of assembly, heterodimer of two subunits, one of which binds GTP.

It is found in the cytoplasm. Its function is as follows. Directs the termination of nascent peptide synthesis (translation) in response to the termination codons UAA, UAG and UGA. The polypeptide is Peptide chain release factor subunit 1 (prf1) (Methanocaldococcus jannaschii (strain ATCC 43067 / DSM 2661 / JAL-1 / JCM 10045 / NBRC 100440) (Methanococcus jannaschii)).